An 89-amino-acid chain; its full sequence is Dynein light chain LC6, flagellar outer arm (89 aa).

Belongs to the dynein light chain family. In terms of assembly, consists of at least 3 heavy chains (alpha, beta and gamma), 2 intermediate chains and 8 light chains.

Its subcellular location is the cytoplasm. The protein localises to the cytoskeleton. It is found in the flagellum axoneme. The chain is Dynein light chain LC6, flagellar outer arm from Heliocidaris crassispina (Sea urchin).